Here is a 102-residue protein sequence, read N- to C-terminus: NADH-quinone oxidoreductase subunit K (102 aa).

3 helical membrane passes run 3–23, 31–51, and 66–86; these read IGLTHYLTVGAILFGLGAFGI, IVLLMAIELMLLAVNINLVAF, and FILTVAAAEAAIGLAILVVYF.

Belongs to the complex I subunit 4L family. NDH-1 is composed of 14 different subunits. Subunits NuoA, H, J, K, L, M, N constitute the membrane sector of the complex.

It is found in the cell inner membrane. The catalysed reaction is a quinone + NADH + 5 H(+)(in) = a quinol + NAD(+) + 4 H(+)(out). Its function is as follows. NDH-1 shuttles electrons from NADH, via FMN and iron-sulfur (Fe-S) centers, to quinones in the respiratory chain. The immediate electron acceptor for the enzyme in this species is believed to be ubiquinone. Couples the redox reaction to proton translocation (for every two electrons transferred, four hydrogen ions are translocated across the cytoplasmic membrane), and thus conserves the redox energy in a proton gradient. This chain is NADH-quinone oxidoreductase subunit K, found in Rhodospirillum centenum (strain ATCC 51521 / SW).